We begin with the raw amino-acid sequence, 519 residues long: tRNA pseudouridine synthase Pus10 (519 aa).

The tract at residues 70–98 (NENEEIDENTKNNEDTENKADDKSQSNEE) is disordered. Residues 77 to 98 (ENTKNNEDTENKADDKSQSNEE) show a composition bias toward basic and acidic residues. The THUMP domain maps to 144–265 (NESEENESNI…NQKIYLQINP (122 aa)). The active-site Nucleophile is the Asp334. 2 residues coordinate substrate: Tyr398 and Tyr476.

Belongs to the pseudouridine synthase Pus10 family.

It catalyses the reaction uridine(54) in tRNA = pseudouridine(54) in tRNA. The catalysed reaction is uridine(55) in tRNA = pseudouridine(55) in tRNA. Its function is as follows. Responsible for synthesis of pseudouridine from uracil-54 and uracil-55 in the psi GC loop of transfer RNAs. The polypeptide is tRNA pseudouridine synthase Pus10 (Methanococcus voltae (strain ATCC BAA-1334 / A3)).